The following is a 198-amino-acid chain: Sporulation cortex protein CoxA (198 aa).

The signal sequence occupies residues 1-21 (MGKKMTIASLILMTAGLTACG). The interval 91–115 (PLATDGTYNNTNNRNMNRNAANNGY) is disordered. Residues 95 to 115 (DGTYNNTNNRNMNRNAANNGY) show a composition bias toward low complexity.

Its subcellular location is the spore cortex. The polypeptide is Sporulation cortex protein CoxA (coxA) (Bacillus subtilis (strain 168)).